A 368-amino-acid polypeptide reads, in one-letter code: Chaperone protein DnaJ (368 aa).

A J domain is found at 5–69 (DYYEVLGVAR…NQRARYDQFG (65 aa)). The CR-type zinc-finger motif lies at 125-207 (GVEKVITIPV…CRGAGRVRKN (83 aa)). The Zn(2+) site is built by C138, C141, C155, C158, C181, C184, C195, and C198. CXXCXGXG motif repeat units lie at residues 138–145 (CGTCHGSG), 155–162 (CKRCGGSG), 181–188 (CSTCHGRG), and 195–202 (CETCRGAG).

The protein belongs to the DnaJ family. Homodimer. Zn(2+) serves as cofactor.

The protein localises to the cytoplasm. Functionally, participates actively in the response to hyperosmotic and heat shock by preventing the aggregation of stress-denatured proteins and by disaggregating proteins, also in an autonomous, DnaK-independent fashion. Unfolded proteins bind initially to DnaJ; upon interaction with the DnaJ-bound protein, DnaK hydrolyzes its bound ATP, resulting in the formation of a stable complex. GrpE releases ADP from DnaK; ATP binding to DnaK triggers the release of the substrate protein, thus completing the reaction cycle. Several rounds of ATP-dependent interactions between DnaJ, DnaK and GrpE are required for fully efficient folding. Also involved, together with DnaK and GrpE, in the DNA replication of plasmids through activation of initiation proteins. This is Chaperone protein DnaJ from Exiguobacterium sibiricum (strain DSM 17290 / CCUG 55495 / CIP 109462 / JCM 13490 / 255-15).